The primary structure comprises 441 residues: MTKFLAGAAIVLAVAFGSFFSQSSTVTPPAPRYLPNDWDSTCTISKSGAYEVYSGDNSFSTSSADHLSALKIHPNINSTNWEQWEFDGSSQTGLSSVLLVFSRDPSYSFFGQGNLRIEFYIALPDGKRVEVLDYLEESTVVHCPGRYTAGMWNSTDRSYSFRIDDNMKNAQLSFDSAKIHGKFNVTSDTSSALADGTLWTGKDDRKGVSELSPGLFYAVPIPGGFVQMDATLESGKRLVFKGKGGSTRLWAKAGWLNLCGGWKNIRGWAGPYTVVYWELISRINKGVKYTTGLLFRDGELLVGTRNGNISQTEDYTVFEDLYGGEVKGSFADQSTGHNLKFVSPDQEKEWSFDIEHMHSFVEFRAPGEDEYGNKGLGQSGFTNRVSGGEVGEDRAYEGRGITEKCRWPKEFGKLALAIASGAGFFGPKFQMIFIKVVSYLV.

The signal sequence occupies residues 1-25 (MTKFLAGAAIVLAVAFGSFFSQSST). N77, N153, N184, and N308 each carry an N-linked (GlcNAc...) asparagine glycan.

The protein belongs to the Diels-Alderase family.

It participates in mycotoxin biosynthesis. In terms of biological role, hexane cyclase; part of the gene cluster that mediates the biosynthesis of GKK1032, fungal natural products containing a macrocyclic para-cyclophane connected to a decahydrofluorene ring system that show potent antitumor activities. Within the pathway, gkaB functions synergistically with gkaX and gkaZ to form the cyclophane. The pathway begins with the PKS-NRPS gkaA which, with the help of the trans-enoyl reductase gkaC, synthesizes the polyketide-tyrosyl acyl thioester product which can be reductively off-loaded by the terminal reductase (R) domain in gkaA. The alpha/beta hydrolase gkaG is then required to catalyze the subsequent Knoevenagel condensation that affords the 3-pyrrolin-2-one ring, whereas the three proteins gkaB, gkaX and gkaZ then function synergistically to form the cyclophane. The polypeptide is Hexane cyclase gkaB (Penicillium citrinum).